A 195-amino-acid polypeptide reads, in one-letter code: dCTP deaminase (195 aa).

Residues 105–110 (RSSLGR), Asp-123, 131–133 (TLE), Gln-152, Tyr-166, Lys-173, and Gln-177 each bind dCTP. Glu-133 serves as the catalytic Proton donor/acceptor. The disordered stretch occupies residues 159–195 (KTPADRPYGAERGSKYQGQSGPQASKIQGDREFGGDQ). Basic and acidic residues predominate over residues 160–172 (TPADRPYGAERGS). Positions 174-184 (YQGQSGPQASK) are enriched in polar residues. Positions 186-195 (QGDREFGGDQ) are enriched in basic and acidic residues.

Belongs to the dCTP deaminase family. Homotrimer.

It carries out the reaction dCTP + H2O + H(+) = dUTP + NH4(+). The protein operates within pyrimidine metabolism; dUMP biosynthesis; dUMP from dCTP (dUTP route): step 1/2. Its function is as follows. Catalyzes the deamination of dCTP to dUTP. This chain is dCTP deaminase, found in Haloarcula marismortui (strain ATCC 43049 / DSM 3752 / JCM 8966 / VKM B-1809) (Halobacterium marismortui).